A 138-amino-acid chain; its full sequence is MPKYYCDYCDTFLTHDSPSVRKTHNNGRKHKENVRFYYQKWMEEQAQTLIDQTTAAFQSKPNSQMPPNAPPGLMPPPGMLPPPGGMPPGRMPPQGLPFPPPGPIPPPPGAGGMRPPHGQMHMGGPRPQMGRPPMSLRS.

Residues 4 to 36 (YYCDYCDTFLTHDSPSVRKTHNNGRKHKENVRF) form a Matrin-type zinc finger. Residues 58–138 (QSKPNSQMPP…MGRPPMSLRS (81 aa)) are disordered. The span at 67 to 109 (PNAPPGLMPPPGMLPPPGGMPPGRMPPQGLPFPPPGPIPPPPG) shows a compositional bias: pro residues. A compositionally biased stretch (low complexity) spans 113-138 (MRPPHGQMHMGGPRPQMGRPPMSLRS).

Belongs to the U1 small nuclear ribonucleoprotein C family. In terms of assembly, U1 snRNP is composed of the 7 core Sm proteins B/B', D1, D2, D3, E, F and G that assemble in a heptameric protein ring on the Sm site of the small nuclear RNA to form the core snRNP, and at least 3 U1 snRNP-specific proteins U1-70K, U1-A and U1-C. U1-C interacts with U1 snRNA and the 5' splice-site region of the pre-mRNA.

It is found in the nucleus. Component of the spliceosomal U1 snRNP, which is essential for recognition of the pre-mRNA 5' splice-site and the subsequent assembly of the spliceosome. U1-C is directly involved in initial 5' splice-site recognition for both constitutive and regulated alternative splicing. The interaction with the 5' splice-site seems to precede base-pairing between the pre-mRNA and the U1 snRNA. Stimulates commitment or early (E) complex formation by stabilizing the base pairing of the 5' end of the U1 snRNA and the 5' splice-site region. This is U1 small nuclear ribonucleoprotein C from Nematostella vectensis (Starlet sea anemone).